A 333-amino-acid polypeptide reads, in one-letter code: T-cell surface glycoprotein CD1b-1 (333 aa).

Positions 1-18 are cleaved as a signal peptide; that stretch reads MLLLPLLLLAVIVPGGDN. Topologically, residues 19–302 are extracellular; that stretch reads EDVFQGPTSF…LYWGHPTSTG (284 aa). N-linked (GlcNAc...) asparagine glycosylation is found at Asn-38, Asn-75, Asn-146, and Asn-258. 2 cysteine pairs are disulfide-bonded: Cys-120/Cys-184 and Cys-224/Cys-279. One can recognise an Ig-like domain in the interval 185 to 295; it reads PRYFLSVLDA…LGDQDIVLYW (111 aa). Residues 303–323 form a helical membrane-spanning segment; the sequence is LIFVAIIVSSLILLICLALWF. The Cytoplasmic portion of the chain corresponds to 324–333; sequence WRRWSYLTIL. The Internalization signal signature appears at 329 to 332; sequence YLTI.

As to quaternary structure, heterodimer with B2M (beta-2-microglobulin). Interacts with saposin C.

Its subcellular location is the cell membrane. It localises to the endosome membrane. It is found in the lysosome membrane. Antigen-presenting protein that binds self and non-self lipid and glycolipid antigens and presents them to T-cell receptors on natural killer T-cells. In Ovis aries (Sheep), this protein is T-cell surface glycoprotein CD1b-1.